The chain runs to 468 residues: Immunoglobulin superfamily member 21 (468 aa).

Residues M1–G24 form the signal peptide. 2 Ig-like domains span residues Y25–A132 and P344–I429. Residues C46 and C116 are joined by a disulfide bond.

Interacts (Ig-like 1 domain) with NRXN2 (via Laminin G-like 1 domain) in a trans-interaction manner. In terms of tissue distribution, expressed in brain.

The protein resides in the postsynaptic cell membrane. In terms of biological role, involved in synaptic inhibition in the brain. Selectively regulates inhibitory presynaptic differentiation through interacting with presynaptic NRXN2. This chain is Immunoglobulin superfamily member 21, found in Rattus norvegicus (Rat).